A 574-amino-acid polypeptide reads, in one-letter code: MNNSALRAYLSTRAPDQIHSAFVAYLANLDLVAHQFPQIASDIVQELIDQRSYVKLIASENYSSLAVQAAMANLLTDKYAEGFPHHRYYGGCQNVDSIESAAAAEACALFGAEHAYVQPHSGADANLVAFWAILSRQIEMPTLSSLGVTAATHLSEEQWEVLRQKMGNQKLMGLDYFSGGHLTHGYRQNVSGRMFRVVSYAVDRDTGLLDYAAIEAQAKRERPLILLAGYSAYPRSINFRIFREIADKVGAVLMADMAHFAGLVAGGVFTGDEDPVRWSHIVTSTTHKTLRGPRGAFILCKKEFAEAVDKGCPLVLGGPLPHVMAAKAVAFREARNAAFKTYAHAVRDNARALADACIQQGMQLQTGGTDNHLLLLDVRPFGLTGRQAERALIDCGVTLNRNSLPFDPNGAWLTSGLRIGTPAVTSLGMGPEEMKRIARLIARVLGAATPVRTKTGALSKSAAEVPGEVRSSVCSEVRELLARFTLYPELDEPFLRAHFTRRPAGQNTCRRRDLNPYGVTPTDFESVVSASFTTSARAQPITRGTKGTAVHVVFLREAPCLPLREPLFFSHEEF.

G180–L182 contacts (6S)-5,6,7,8-tetrahydrofolate. K288 carries the N6-(pyridoxal phosphate)lysine modification. Residue E306 coordinates (6S)-5,6,7,8-tetrahydrofolate.

Belongs to the SHMT family. In terms of assembly, homodimer. Pyridoxal 5'-phosphate serves as cofactor.

Its subcellular location is the cytoplasm. It catalyses the reaction (6R)-5,10-methylene-5,6,7,8-tetrahydrofolate + glycine + H2O = (6S)-5,6,7,8-tetrahydrofolate + L-serine. Its pathway is one-carbon metabolism; tetrahydrofolate interconversion. The protein operates within amino-acid biosynthesis; glycine biosynthesis; glycine from L-serine: step 1/1. Catalyzes the reversible interconversion of serine and glycine with tetrahydrofolate (THF) serving as the one-carbon carrier. This reaction serves as the major source of one-carbon groups required for the biosynthesis of purines, thymidylate, methionine, and other important biomolecules. Also exhibits THF-independent aldolase activity toward beta-hydroxyamino acids, producing glycine and aldehydes, via a retro-aldol mechanism. The chain is Serine hydroxymethyltransferase from Treponema pallidum (strain Nichols).